The primary structure comprises 375 residues: Patatin-1-Kuras 2 (375 aa).

A signal peptide spans 1-11; sequence MILATTSSTFA. Residues 20 to 218 form the PNPLA domain; the sequence is LSIDGGGIKG…TVADPALLSV (199 aa). The GXGXXG motif lies at 24–29; sequence GGGIKG. The GXSXG signature appears at 63 to 67; it reads GTSTG. The active-site Nucleophile is the Ser65. Residue Asn103 is glycosylated (N-linked (GlcNAc...) asparagine). The active-site Proton acceptor is the Asp204. Positions 204–206 match the DGA/G motif; that stretch reads DGA. Residues 349–373 are a coiled coil; that stretch reads ETYEEALKRFAKLLSDRKKLRANKA.

This sequence belongs to the patatin family. As to expression, tuber.

The protein localises to the vacuole. Its function is as follows. Probable lipolytic acyl hydrolase (LAH), an activity which is thought to be involved in the response of tubers to pathogens. The protein is Patatin-1-Kuras 2 (pat1-k2) of Solanum tuberosum (Potato).